Reading from the N-terminus, the 373-residue chain is MATSASSHLNKGIKQMYMSLPQGEKVQAMYIWVDGTGEGLRCKTRTLDCEPKCVEELPEWNFDGSSTFQSESSNSDMYLSPVAMFRDPFRKEPNKLVFCEVFKYNQKPAETNLRHTCKRIMDMVSNQHPWFGMEQEYTLLGTDGHPFGWPSDGFPGPQGLYYCGVGADKAYRRDIMEAHYRACLYAGVKITGTYAEVKHAQWEFQIGPCEGIRMGDHLWVARFILHRVCKDFGVIATFDSKPIPGNWNGAGCHTNFSTKTMREENGLKHIKEAIEKLSKRHRYHIRAYDPKGGLDNARRLTGFHKTSNINDFSAGVADRSASIRIPRTVGQEKKGYFEARCPSANCDPFAVTEAIVRTCLLNETGDQPFQYKN.

Ala-2 is subject to N-acetylalanine. Positions 2–25 are required for glutamine-induced ubiquitination by CRL4(CRBN) and proteasomal degradation; sequence ATSASSHLNKGIKQMYMSLPQGEK. An N6-acetyllysine mark is found at Lys-11 and Lys-14. The region spanning 24 to 106 is the GS beta-grasp domain; the sequence is EKVQAMYIWV…VFCEVFKYNQ (83 aa). Tyr-104 carries the phosphotyrosine modification. A GS catalytic domain is found at 113 to 373; the sequence is LRHTCKRIMD…TGDQPFQYKN (261 aa). Glu-134 provides a ligand contact to ATP. Mn(2+) is bound by residues Glu-134, Glu-136, Glu-196, and Glu-203. 203–208 is a binding site for ATP; it reads EFQIGP. 246 to 247 serves as a coordination point for L-glutamate; it reads NW. A Mn(2+)-binding site is contributed by His-253. ATP contacts are provided by residues 255-257, Arg-319, and Arg-324; that span reads NFS. Residue Arg-319 participates in L-glutamate binding. Position 336-338 (336-338) interacts with ADP; sequence YFE. Glu-338 lines the Mn(2+) pocket. L-glutamate is bound at residue Arg-340. Residue Ser-343 is modified to Phosphoserine.

The protein belongs to the glutamine synthetase family. Decamer; composed of two pentamers. Interacts with PALMD. Interacts with RHOJ. Interacts with BEST2; this interaction tethers a fraction of GLUL to the membrane, causing a decrease of cytosolic glutamine synthase (GS) activity and inhibits the chloride channel activity of BEST2 by affecting the gating at the aperture in the absence of intracellular glutamate. Mg(2+) is required as a cofactor. The cofactor is Mn(2+). Palmitoylated; undergoes autopalmitoylation. In terms of processing, acetylated by EP300/p300; acetylation is stimulated by increased glutamine levels and promotes ubiquitin-mediated proteasomal degradation. Post-translationally, ubiquitinated by ZNRF1. Ubiquitinated by the DCX (DDB1-CUL4-X-box) E3 ubiquitin-protein ligase complex called CRL4(CRBN), leading to proteasomal degradation.

The protein localises to the cytoplasm. It localises to the cytosol. Its subcellular location is the microsome. It is found in the mitochondrion. The protein resides in the cell membrane. The enzyme catalyses L-glutamate + NH4(+) + ATP = L-glutamine + ADP + phosphate + H(+). It carries out the reaction L-cysteinyl-[protein] + hexadecanoyl-CoA = S-hexadecanoyl-L-cysteinyl-[protein] + CoA. Its activity is regulated as follows. Glutamine synthetase activity is inhibited by methionine sulfoximine (MSO). Functionally, glutamine synthetase that catalyzes the ATP-dependent conversion of glutamate and ammonia to glutamine. Its role depends on tissue localization: in the brain, it regulates the levels of toxic ammonia and converts neurotoxic glutamate to harmless glutamine, whereas in the liver, it is one of the enzymes responsible for the removal of ammonia. Plays a key role in ammonium detoxification during erythropoiesis: the glutamine synthetase activity is required to remove ammonium generated by porphobilinogen deaminase (HMBS) during heme biosynthesis to prevent ammonium accumulation and oxidative stress. Essential for proliferation of fetal skin fibroblasts. Independently of its glutamine synthetase activity, required for endothelial cell migration during vascular development. Involved in angiogenesis by regulating membrane localization and activation of the GTPase RHOJ, possibly by promoting RHOJ palmitoylation. May act as a palmitoyltransferase for RHOJ: able to autopalmitoylate and then transfer the palmitoyl group to RHOJ. Plays a role in ribosomal 40S subunit biogenesis. Through the interaction with BEST2, inhibits BEST2 channel activity by affecting the gating at the aperture in the absence of intracellular L-glutamate, but sensitizes BEST2 to intracellular L-glutamate, which promotes the opening of BEST2 and thus relieves its inhibitory effect on BEST2. In Cricetulus griseus (Chinese hamster), this protein is Glutamine synthetase.